A 407-amino-acid polypeptide reads, in one-letter code: Multifunctional CCA protein (407 aa).

ATP is bound by residues glycine 8 and arginine 11. 2 residues coordinate CTP: glycine 8 and arginine 11. Mg(2+) contacts are provided by aspartate 21 and aspartate 23. ATP is bound by residues arginine 91, arginine 137, and arginine 140. Residues arginine 91, arginine 137, and arginine 140 each contribute to the CTP site. In terms of domain architecture, HD spans 228–329 (TGVHALMALA…VALFDRVDAW (102 aa)).

The protein belongs to the tRNA nucleotidyltransferase/poly(A) polymerase family. Bacterial CCA-adding enzyme type 1 subfamily. In terms of assembly, monomer. Can also form homodimers and oligomers. It depends on Mg(2+) as a cofactor. The cofactor is Ni(2+).

The catalysed reaction is a tRNA precursor + 2 CTP + ATP = a tRNA with a 3' CCA end + 3 diphosphate. It catalyses the reaction a tRNA with a 3' CCA end + 2 CTP + ATP = a tRNA with a 3' CCACCA end + 3 diphosphate. Catalyzes the addition and repair of the essential 3'-terminal CCA sequence in tRNAs without using a nucleic acid template. Adds these three nucleotides in the order of C, C, and A to the tRNA nucleotide-73, using CTP and ATP as substrates and producing inorganic pyrophosphate. tRNA 3'-terminal CCA addition is required both for tRNA processing and repair. Also involved in tRNA surveillance by mediating tandem CCA addition to generate a CCACCA at the 3' terminus of unstable tRNAs. While stable tRNAs receive only 3'-terminal CCA, unstable tRNAs are marked with CCACCA and rapidly degraded. The polypeptide is Multifunctional CCA protein (Erwinia tasmaniensis (strain DSM 17950 / CFBP 7177 / CIP 109463 / NCPPB 4357 / Et1/99)).